The following is a 506-amino-acid chain: Serine/threonine-protein kinase D6PKL1 (506 aa).

Positions 1 to 96 (MASKYGSGVL…TCSSFSGNNK (96 aa)) are disordered. The span at 12 to 23 (ENKKEKGDKETP) shows a compositional bias: basic and acidic residues. The segment covering 24-54 (ETSYSSQSVSVNTLADQVSSTLSFAPSSDSK) has biased composition (polar residues). The segment covering 55–67 (TGGEVKFNEKSDQ) has biased composition (basic and acidic residues). The segment covering 77–92 (STSSDISDESTCSSFS) has biased composition (low complexity). Residues 123–456 (FRLLKRLGCG…ATEMKQHPFF (334 aa)) enclose the Protein kinase domain. Residues 129 to 137 (LGCGDIGTV) and Lys152 each bind ATP. Residue Asp248 is the Proton acceptor of the active site. Residues 475–495 (PVDYESAPATPAAATSTSVKS) form a disordered region. A compositionally biased stretch (low complexity) spans 480-492 (SAPATPAAATSTS).

This sequence belongs to the protein kinase superfamily. AGC Ser/Thr protein kinase family.

The protein resides in the cell membrane. It carries out the reaction L-seryl-[protein] + ATP = O-phospho-L-seryl-[protein] + ADP + H(+). It catalyses the reaction L-threonyl-[protein] + ATP = O-phospho-L-threonyl-[protein] + ADP + H(+). Functionally, protein kinase that regulates the auxin transport activity of PIN auxin efflux facilitators by direct phosphorylation. D6PK-mediated PIN phosphorylation promotes auxin transport in the hypocotyl and this is a prerequisite for PHOT1-dependent hypocotyl bending. The chain is Serine/threonine-protein kinase D6PKL1 (D6PKL1) from Arabidopsis thaliana (Mouse-ear cress).